Consider the following 250-residue polypeptide: Hydroxyacylglutathione hydrolase (250 aa).

The Zn(2+) site is built by His-52, His-54, Asp-56, His-57, His-107, Asp-128, and His-166.

This sequence belongs to the metallo-beta-lactamase superfamily. Glyoxalase II family. As to quaternary structure, monomer. Requires Zn(2+) as cofactor.

The enzyme catalyses an S-(2-hydroxyacyl)glutathione + H2O = a 2-hydroxy carboxylate + glutathione + H(+). Its pathway is secondary metabolite metabolism; methylglyoxal degradation; (R)-lactate from methylglyoxal: step 2/2. Its function is as follows. Thiolesterase that catalyzes the hydrolysis of S-D-lactoyl-glutathione to form glutathione and D-lactic acid. This Neisseria gonorrhoeae (strain NCCP11945) protein is Hydroxyacylglutathione hydrolase.